The sequence spans 1235 residues: Major DNA-binding protein (1235 aa).

Positions 536-584 (GGLDGKGDDGVPGGGAGGGGGRDVSGGPSDGLGGGRGGGGGGDSGGMMG) are disordered. Residues 545-584 (GVPGGGAGGGGGRDVSGGPSDGLGGGRGGGGGGDSGGMMG) show a composition bias toward gly residues. The short motif at 846–847 (FW) is the Required for filament formation element. Positions 1214–1226 (GVGGSSGGGGGSG) are enriched in gly residues. The segment at 1214-1235 (GVGGSSGGGGGSGLLPAKRSRL) is disordered. Residues 1232-1235 (RSRL) are required for nuclear localization.

The protein belongs to the herpesviridae major DNA-binding protein family. As to quaternary structure, homooligomers. Forms double-helical filaments necessary for the formation of replication compartments within the host nucleus. Interacts with the origin-binding protein. Interacts with the helicase primase complex; this interaction stimulates primer synthesis activity of the helicase-primase complex. Interacts with the DNA polymerase. Interacts with the alkaline exonuclease; this interaction increases its nuclease processivity.

It localises to the host nucleus. Plays several crucial roles in viral infection. Participates in the opening of the viral DNA origin to initiate replication by interacting with the origin-binding protein. May disrupt loops, hairpins and other secondary structures present on ssDNA to reduce and eliminate pausing of viral DNA polymerase at specific sites during elongation. Promotes viral DNA recombination by performing strand-transfer, characterized by the ability to transfer a DNA strand from a linear duplex to a complementary single-stranded DNA circle. Can also catalyze the renaturation of complementary single strands. Additionally, reorganizes the host cell nucleus, leading to the formation of prereplicative sites and replication compartments. This process is driven by the protein which can form double-helical filaments in the absence of DNA. The protein is Major DNA-binding protein of Homo sapiens (Human).